A 447-amino-acid polypeptide reads, in one-letter code: Phosphoglucosamine mutase (447 aa).

The active-site Phosphoserine intermediate is S107. Positions 107, 246, 248, and 250 each coordinate Mg(2+). Phosphoserine is present on S107.

The protein belongs to the phosphohexose mutase family. It depends on Mg(2+) as a cofactor. In terms of processing, activated by phosphorylation.

The catalysed reaction is alpha-D-glucosamine 1-phosphate = D-glucosamine 6-phosphate. In terms of biological role, catalyzes the conversion of glucosamine-6-phosphate to glucosamine-1-phosphate. This chain is Phosphoglucosamine mutase, found in Ralstonia nicotianae (strain ATCC BAA-1114 / GMI1000) (Ralstonia solanacearum).